Reading from the N-terminus, the 354-residue chain is Hyaluronan and proteoglycan link protein 1 (354 aa).

The propeptide occupies 1–15; the sequence is MKSLLLLVLISICGA. 2 N-linked (GlcNAc...) asparagine glycosylation sites follow: Asn21 and Asn56. Residues 38–152 enclose the Ig-like V-type domain; that stretch reads PRLLVEAEQA…EGLEDDTAVV (115 aa). Disulfide bonds link Cys61-Cys139, Cys181-Cys252, Cys205-Cys226, Cys279-Cys349, and Cys304-Cys325. Link domains are found at residues 159–254 and 259–351; these read VVFP…FCFT and GRFY…YCFR.

It belongs to the HAPLN family.

It localises to the secreted. It is found in the extracellular space. The protein resides in the extracellular matrix. Functionally, stabilizes the aggregates of proteoglycan monomers with hyaluronic acid in the extracellular cartilage matrix. The polypeptide is Hyaluronan and proteoglycan link protein 1 (HAPLN1) (Equus caballus (Horse)).